We begin with the raw amino-acid sequence, 43 residues long: Protein PsbN (43 aa).

The helical transmembrane segment at 5–27 (TFITIFISCLLVSVTGYALYTAF) threads the bilayer.

It belongs to the PsbN family.

It is found in the plastid. It localises to the chloroplast thylakoid membrane. Functionally, may play a role in photosystem I and II biogenesis. The protein is Protein PsbN of Chara vulgaris (Common stonewort).